Reading from the N-terminus, the 529-residue chain is GMP synthase [glutamine-hydrolyzing] (529 aa).

A Glutamine amidotransferase type-1 domain is found at 13–204 (PVLVVDFGAQ…LLETAGLEPT (192 aa)). The active-site Nucleophile is the Cys-90. Catalysis depends on residues His-178 and Glu-180. The GMPS ATP-PPase domain occupies 205 to 403 (WTAGNIAEQL…LGLPEEIVAR (199 aa)). 233 to 239 (SGGVDSA) contributes to the ATP binding site.

Homodimer.

It catalyses the reaction XMP + L-glutamine + ATP + H2O = GMP + L-glutamate + AMP + diphosphate + 2 H(+). It participates in purine metabolism; GMP biosynthesis; GMP from XMP (L-Gln route): step 1/1. In terms of biological role, catalyzes the synthesis of GMP from XMP. The polypeptide is GMP synthase [glutamine-hydrolyzing] (Corynebacterium jeikeium (strain K411)).